The following is a 1682-amino-acid chain: MWRAEGKWLPKTSRKSVSQSVFCGTSTYCVLNTVPPIEDDHGNSNSSHVKIFLPKKLLECLPKCSSLPKERHRWNTNEEIAAYLITFEKHEEWLTTSPKTRPQNGSMILYNRKKVKYRKDGYCWKKRKDGKTTREDHMKLKVQGVECLYGCYVHSSIIPTFHRRCYWLLQNPDIVLVHYLNVPAIEDCGKPCGPILCSINTDKKEWAKWTKEELIGQLKPMFHGIKWTCSNGNSSSGFSVEQLVQQILDSHQTKPQPRTHNCLCTGSLGAGSSVHHKCNSAKHRIISPKVEPRAGGYGGHSEVQHNDVSEGKHEPSHGRSTSREKRNGKVAKPALLHQNSTEVSSTNQVEVPDTTQSSPVSISSGLNSDPDMVDSPVVTGVSSMAVASVMGGLSQSATVFMSEVTNEAVYTMSPTAGPNHHLLSPDASQGLVLAVSSDGHKFAFPTTGSSDSLSMLPANVSEELVLSTTLDGGRKIPETAMNFDPDCFLNNPKQGQTYGGGGLKAEMVSTNIRHSPPAERSFGFTSVLTKEIKTEDTSFEQQMAKEAAYSSSAAAAASSSLTLTAAGSSLLPSGGGLSPSTTLEQMDFSAIDSNKDYASSFSQTGHSPHIHQTPSPSFFLQDASKPLPLEQNTHSSLSESGAAFVMPTVKTEASSQTSSCSGHVETRIESTSSLHLMQFQANFQAMAAEGEVTMETSQAAEGNEVLLKSGELQACGSEHYLQPETNGVIRSAGGVPLLPSNVVQGLYPVAQPSLGNSSNMELSLDHFDISFSNQFSDLINDFISVEGGSGTIYGHQLVSGDSAALSQSEDGARAPFTQAEMCIPCCSPQQGSLQLSSAEGGPSTMAYMHVAEVVSAASAQGALGMLQQSGRVFMVTDYSPEWSYPEGGVKVLITGPWQEASNNYSCLFDQISVPASLIQPGVLRCYCPAHDTGLVTLQVAFNNQIISNSVVFEYKARALPTLPSSQHDWLSLDDNQFRMSILERLEQMERRMAEMTGSQQHKQASGGGGSGSGSGSGAGGGQAQCASGAGTLGSCFESRVVVVCEKMMSRACWAKSKHLIHSKTFRGMTLLHLAAAQGYATLIQTLIKWRTKHADSIDLELEVDPLNVDHFSCTPLMWACALGHLEAAVVLYKWDRRAISIPDSLGRLPLGIARSRGHVKLAECLEHLQRDEQAQLGQASRIHCAPSEEPTTDSWMAQWQREAMSPPEIPKGVTVIASTNPELRRPRSEPSNYYSTEGHKDYPAPKKHKLNPESFQARQEKLLCTALSLEQPNIRKQSPRSKQPSPETISPSEGVREYSREAAPPTPETAASQASASQPVVKWSAKDLYIGVSTVQVTGNPKGTSVVKDAAPSQVRPREPMSVLMLANREVVNTEMGAYRDRTEHEDCPQPMDDIQVNMMTLAEHIIEATPDRIKQENFVPMESSALERTDPATISSTMSWLASYLADADRLPSAAHIRSAYTEPLTPSSNASLSPAGSPVSEVAFEKPSLPSAADWSEFLSASTSEKVESELAQLTLSDHEQRELYEAARLVQTAFRKYKGRPLREQQEVAAAVIQRCYRKYKQLTWIALKYALYKKMTQAAILIQSKFRSYYEQKRFQQSRRAAVLIQNFYRSYKKCGRRRPARRTAVIVQQKLRSSLLTKKQDQAARKIMRFLRRCRHSPLVDHRLYKRSERIEKGQGT.

The segment at residues 63–188 (KCSSLPKERH…YLNVPAIEDC (126 aa)) is a DNA-binding region (CG-1). The short motif at 112–119 (RKKVKYRK) is the Nuclear localization signal element. Disordered stretches follow at residues 284 to 375 (RIIS…MVDS) and 599 to 622 (SSFS…FLQD). The segment covering 302 to 327 (EVQHNDVSEGKHEPSHGRSTSREKRN) has biased composition (basic and acidic residues). Polar residues-rich tracts occupy residues 337–367 (HQNS…SGLN) and 599–618 (SSFS…SPSF). The 79-residue stretch at 877–955 (DYSPEWSYPE…ISNSVVFEYK (79 aa)) folds into the IPT/TIG domain. Residues 992-1020 (MAEMTGSQQHKQASGGGGSGSGSGSGAGG) are disordered. Positions 1005–1020 (SGGGGSGSGSGSGAGG) are enriched in gly residues. ANK repeat units lie at residues 1066–1095 (RGMT…KHAD), 1111–1141 (FSCT…AISI), and 1145–1174 (LGRL…DEQA). 2 disordered regions span residues 1217–1249 (ASTN…KKHK) and 1267–1318 (LSLE…SASQ). Residues 1268–1291 (SLEQPNIRKQSPRSKQPSPETISP) are compositionally biased toward polar residues. Residues 1308-1318 (ETAASQASASQ) are compositionally biased toward low complexity. IQ domains follow at residues 1549–1585 (QEVA…AAIL), 1586–1608 (IQSK…AAVL), and 1609–1631 (IQNF…TAVI).

This sequence belongs to the CAMTA family. In terms of assembly, may interact with calmodulin.

Its subcellular location is the nucleus. It localises to the cytoplasm. Functionally, transcriptional activator. The polypeptide is Calmodulin-binding transcription activator 1 (Mus musculus (Mouse)).